The primary structure comprises 213 residues: Pyrrolidone-carboxylate peptidase (213 aa).

Residues Glu78, Cys141, and His165 contribute to the active site.

It belongs to the peptidase C15 family. In terms of assembly, homotetramer.

It localises to the cytoplasm. The enzyme catalyses Release of an N-terminal pyroglutamyl group from a polypeptide, the second amino acid generally not being Pro.. In terms of biological role, removes 5-oxoproline from various penultimate amino acid residues except L-proline. The polypeptide is Pyrrolidone-carboxylate peptidase (Alkaliphilus oremlandii (strain OhILAs) (Clostridium oremlandii (strain OhILAs))).